A 232-amino-acid polypeptide reads, in one-letter code: Large ribosomal subunit protein uL1 (232 aa).

The protein belongs to the universal ribosomal protein uL1 family. Part of the 50S ribosomal subunit.

In terms of biological role, binds directly to 23S rRNA. The L1 stalk is quite mobile in the ribosome, and is involved in E site tRNA release. Protein L1 is also a translational repressor protein, it controls the translation of the L11 operon by binding to its mRNA. In Colwellia psychrerythraea (strain 34H / ATCC BAA-681) (Vibrio psychroerythus), this protein is Large ribosomal subunit protein uL1.